A 207-amino-acid chain; its full sequence is Twist-related protein 1 (207 aa).

Residues 1 to 18 (MMQDVSSSPVSPADDSLS) are compositionally biased toward low complexity. Positions 1–110 (MMQDVSSSPV…GGGSPQSYEE (110 aa)) are disordered. Positions 34–43 (RGGRKRRSSR) are enriched in basic residues. 2 stretches are compositionally biased toward gly residues: residues 46 to 65 (AGGG…GGDE) and 80 to 104 (GCGG…GGGS). One can recognise a bHLH domain in the interval 113-164 (TQRVMANVRERQRTQSLNEAFAALRKIIPTLPSDKLSKIQTLKLAARYIDFL). Residues 166-196 (QVLQSDELDSKMASCSYVAHERLSYAFSVWR) are sufficient for transactivation activity.

As to quaternary structure, efficient DNA binding requires dimerization with another bHLH protein. Homodimer or heterodimer with E proteins such as TCF3. ID1 binds preferentially to TCF3 but does not interact efficiently with TWIST1 so ID1 levels control the amount of TCF3 available to dimerize with TWIST and thus determine the type of dimer formed.

It localises to the nucleus. Acts as a transcriptional regulator. Inhibits myogenesis by sequestrating E proteins, inhibiting trans-activation by MEF2, and inhibiting DNA-binding by MYOD1 through physical interaction. This interaction probably involves the basic domains of both proteins. Also represses expression of pro-inflammatory cytokines such as TNFA and IL1B. Regulates cranial suture patterning and fusion. Activates transcription as a heterodimer with E proteins. Regulates gene expression differentially, depending on dimer composition. Homodimers induce expression of FGFR2 and POSTN while heterodimers repress FGFR2 and POSTN expression and induce THBS1 expression. Heterodimerization is also required for osteoblast differentiation. Represses the activity of the circadian transcriptional activator: NPAS2-BMAL1 heterodimer. The protein is Twist-related protein 1 (TWIST1) of Cebus capucinus (White-faced sapajou).